The primary structure comprises 477 residues: Serine/threonine-protein kinase prp4 (477 aa).

A disordered region spans residues 25–123 (KYQQTGNGHS…SPSVKRQNTG (99 aa)). Positions 38–47 (IPEKKLKEDV) are enriched in basic and acidic residues. Over residues 74–86 (EGSNSNTKLDVTN) the composition is skewed to polar residues. The segment covering 87–98 (STTSDSPSIKSS) has biased composition (low complexity). Ser92 carries the phosphoserine modification. Residues 113-123 (PSPSVKRQNTG) are compositionally biased toward polar residues. The 319-residue stretch at 159–477 (YIVQSNLGKG…ALKHPFFIKK (319 aa)) folds into the Protein kinase domain. Residues 165-173 (LGKGMFSTV) and Lys188 contribute to the ATP site. Asp286 (proton acceptor) is an active-site residue. Residue Tyr320 is modified to Phosphotyrosine.

The protein belongs to the protein kinase superfamily. CMGC Ser/Thr protein kinase family.

It carries out the reaction L-seryl-[protein] + ATP = O-phospho-L-seryl-[protein] + ADP + H(+). It catalyses the reaction L-threonyl-[protein] + ATP = O-phospho-L-threonyl-[protein] + ADP + H(+). Its function is as follows. Has a role in pre-mRNA splicing and is essential for growth. Phosphorylates srp1. This is Serine/threonine-protein kinase prp4 (prp4) from Schizosaccharomyces pombe (strain 972 / ATCC 24843) (Fission yeast).